The following is a 438-amino-acid chain: Na(+)/H(+) antiporter NhaA (438 aa).

Transmembrane regions (helical) follow at residues 23-43 (FGGI…NSFL), 62-82 (FFIG…LFFL), 104-124 (SFPV…YFFL), 133-153 (GFGI…MLLG), 162-182 (VFLI…IALF), 185-205 (TNLK…LALL), 221-241 (VLLW…AVVL), 302-322 (FLAP…NAGV), 337-357 (FGVI…ITFI), 372-392 (WWHI…SMFI), and 410-430 (IAIL…LFAL).

Belongs to the NhaA Na(+)/H(+) (TC 2.A.33) antiporter family.

It localises to the cell inner membrane. The enzyme catalyses Na(+)(in) + 2 H(+)(out) = Na(+)(out) + 2 H(+)(in). In terms of biological role, na(+)/H(+) antiporter that extrudes sodium in exchange for external protons. The protein is Na(+)/H(+) antiporter NhaA of Helicobacter pylori (strain P12).